Consider the following 210-residue polypeptide: 3-demethoxyubiquinol 3-hydroxylase (210 aa).

Positions 59, 89, 92, 141, 173, and 176 each coordinate Fe cation.

Belongs to the COQ7 family. Fe cation is required as a cofactor.

It localises to the cell membrane. It catalyses the reaction a 5-methoxy-2-methyl-3-(all-trans-polyprenyl)benzene-1,4-diol + AH2 + O2 = a 3-demethylubiquinol + A + H2O. It functions in the pathway cofactor biosynthesis; ubiquinone biosynthesis. In terms of biological role, catalyzes the hydroxylation of 2-nonaprenyl-3-methyl-6-methoxy-1,4-benzoquinol during ubiquinone biosynthesis. The polypeptide is 3-demethoxyubiquinol 3-hydroxylase (Marinomonas sp. (strain MWYL1)).